A 270-amino-acid polypeptide reads, in one-letter code: Bifunctional folate synthesis protein (270 aa).

Residues 1–119 (MDQLQIKDLE…TCSVTIHRRK (119 aa)) are DHNA. Residues Glu21, Tyr53, and 72–73 (IE) contribute to the substrate site. The active-site Proton donor/acceptor; for DHNA activity is the Lys99. The segment at 120 to 270 (QRAFIALGSN…IRNLYDALKK (151 aa)) is HPPK. Residues 160 to 163 (TEPW), 171 to 173 (FAN), 192 to 195 (LAIE), 200 to 215 (RVREVHWGPRLIDLDL), 227 to 233 (DLILPHP), and 238 to 240 (RLF) contribute to the ATP site. Asp212 and Asp214 together coordinate Mg(2+).

In the N-terminal section; belongs to the DHNA family. This sequence in the C-terminal section; belongs to the HPPK family. Homotrimer or homotetramer.

The enzyme catalyses 7,8-dihydroneopterin = 6-hydroxymethyl-7,8-dihydropterin + glycolaldehyde. The catalysed reaction is 6-hydroxymethyl-7,8-dihydropterin + ATP = (7,8-dihydropterin-6-yl)methyl diphosphate + AMP + H(+). It functions in the pathway cofactor biosynthesis; tetrahydrofolate biosynthesis; 2-amino-4-hydroxy-6-hydroxymethyl-7,8-dihydropteridine diphosphate from 7,8-dihydroneopterin triphosphate: step 3/4. Its pathway is cofactor biosynthesis; tetrahydrofolate biosynthesis; 2-amino-4-hydroxy-6-hydroxymethyl-7,8-dihydropteridine diphosphate from 7,8-dihydroneopterin triphosphate: step 4/4. In terms of biological role, catalyzes two sequential steps of tetrahydrofolate biosynthesis, the conversion of 7,8-dihydroneopterin to 6-hydroxymethyl-7,8-dihydropterin diphosphate. In Streptococcus pneumoniae serotype 4 (strain ATCC BAA-334 / TIGR4), this protein is Bifunctional folate synthesis protein.